Consider the following 286-residue polypeptide: DegV domain-containing protein SPs1668 (286 aa).

Positions 3-282 (FTIMTDSTAD…PNTLAVFVIG (280 aa)) constitute a DegV domain. Hexadecanoate-binding residues include T62 and S94.

Its function is as follows. May bind long-chain fatty acids, such as palmitate, and may play a role in lipid transport or fatty acid metabolism. The sequence is that of DegV domain-containing protein SPs1668 from Streptococcus pyogenes serotype M3 (strain SSI-1).